The chain runs to 238 residues: Probable transcriptional regulatory protein SpyM51586 (238 aa).

It belongs to the TACO1 family. YeeN subfamily.

Its subcellular location is the cytoplasm. In Streptococcus pyogenes serotype M5 (strain Manfredo), this protein is Probable transcriptional regulatory protein SpyM51586.